The chain runs to 150 residues: Deoxyuridine 5'-triphosphate nucleotidohydrolase (150 aa).

Substrate is bound by residues 67–69 (RSS), asparagine 80, and 84–86 (VID).

Belongs to the dUTPase family. Mg(2+) serves as cofactor.

The enzyme catalyses dUTP + H2O = dUMP + diphosphate + H(+). The protein operates within pyrimidine metabolism; dUMP biosynthesis; dUMP from dCTP (dUTP route): step 2/2. This enzyme is involved in nucleotide metabolism: it produces dUMP, the immediate precursor of thymidine nucleotides and it decreases the intracellular concentration of dUTP so that uracil cannot be incorporated into DNA. In Lactococcus lactis subsp. lactis (strain IL1403) (Streptococcus lactis), this protein is Deoxyuridine 5'-triphosphate nucleotidohydrolase (dut).